Here is a 62-residue protein sequence, read N- to C-terminus: ATP synthase subunit epsilon, mitochondrial (62 aa).

A Phosphothreonine modification is found at Thr-52.

Belongs to the eukaryotic ATPase epsilon family. F-type ATPases have 2 components, CF(1) - the catalytic core - and CF(0) - the membrane proton channel. CF(1) has five subunits: alpha(3), beta(3), gamma(1), delta(1), epsilon(1). CF(0) has three main subunits: a, b and c.

It localises to the mitochondrion. Its subcellular location is the mitochondrion inner membrane. Mitochondrial membrane ATP synthase (F(1)F(0) ATP synthase or Complex V) produces ATP from ADP in the presence of a proton gradient across the membrane which is generated by electron transport complexes of the respiratory chain. F-type ATPases consist of two structural domains, F(1) - containing the extramembraneous catalytic core, and F(0) - containing the membrane proton channel, linked together by a central stalk and a peripheral stalk. During catalysis, ATP synthesis in the catalytic domain of F(1) is coupled via a rotary mechanism of the central stalk subunits to proton translocation. Part of the complex F(1) domain and of the central stalk which is part of the complex rotary element. Rotation of the central stalk against the surrounding alpha(3)beta(3) subunits leads to hydrolysis of ATP in three separate catalytic sites on the beta subunits. In Saccharomyces cerevisiae (strain ATCC 204508 / S288c) (Baker's yeast), this protein is ATP synthase subunit epsilon, mitochondrial (ATP15).